Consider the following 228-residue polypeptide: Urease accessory protein UreF (228 aa).

This sequence belongs to the UreF family. As to quaternary structure, ureD, UreF and UreG form a complex that acts as a GTP-hydrolysis-dependent molecular chaperone, activating the urease apoprotein by helping to assemble the nickel containing metallocenter of UreC. The UreE protein probably delivers the nickel.

It localises to the cytoplasm. Its function is as follows. Required for maturation of urease via the functional incorporation of the urease nickel metallocenter. The polypeptide is Urease accessory protein UreF (Alkalilimnicola ehrlichii (strain ATCC BAA-1101 / DSM 17681 / MLHE-1)).